Consider the following 682-residue polypeptide: Glutamine--fructose-6-phosphate aminotransferase [isomerizing] 2 (682 aa).

Residue cysteine 2 is the For GATase activity of the active site. The Glutamine amidotransferase type-2 domain occupies 2 to 288 (CGIFAYMNYR…DDDIAAVADG (287 aa)). Serine 244 carries the post-translational modification Phosphoserine. 2 SIS domains span residues 360–499 (HLKE…DRIS) and 531–672 (LALE…VDFP). Substrate is bound by residues 377 to 378 (TS), 422 to 424 (SQS), threonine 427, and histidine 578.

As to expression, highest levels of expression in heart, placenta, and spinal cord.

The enzyme catalyses D-fructose 6-phosphate + L-glutamine = D-glucosamine 6-phosphate + L-glutamate. Its pathway is nucleotide-sugar biosynthesis; UDP-N-acetyl-alpha-D-glucosamine biosynthesis; alpha-D-glucosamine 6-phosphate from D-fructose 6-phosphate: step 1/1. Functionally, controls the flux of glucose into the hexosamine pathway. Most likely involved in regulating the availability of precursors for N- and O-linked glycosylation of proteins. The chain is Glutamine--fructose-6-phosphate aminotransferase [isomerizing] 2 (GFPT2) from Homo sapiens (Human).